The primary structure comprises 325 residues: 4-diphosphocytidyl-2-C-methyl-D-erythritol kinase (325 aa).

The active site involves lysine 22. An ATP-binding site is contributed by 110–120 (PVAGGMAGGSA). The active site involves aspartate 152. Residues 306 to 325 (PAPGARVLEAVSTPSPGGRS) form a disordered region.

This sequence belongs to the GHMP kinase family. IspE subfamily.

It catalyses the reaction 4-CDP-2-C-methyl-D-erythritol + ATP = 4-CDP-2-C-methyl-D-erythritol 2-phosphate + ADP + H(+). The protein operates within isoprenoid biosynthesis; isopentenyl diphosphate biosynthesis via DXP pathway; isopentenyl diphosphate from 1-deoxy-D-xylulose 5-phosphate: step 3/6. Functionally, catalyzes the phosphorylation of the position 2 hydroxy group of 4-diphosphocytidyl-2C-methyl-D-erythritol. This is 4-diphosphocytidyl-2-C-methyl-D-erythritol kinase from Kineococcus radiotolerans (strain ATCC BAA-149 / DSM 14245 / SRS30216).